Consider the following 172-residue polypeptide: RNA pyrophosphohydrolase (172 aa).

Residues 6-149 (GYRLNVGIVI…KRDVYRRAMK (144 aa)) enclose the Nudix hydrolase domain. Positions 38–59 (GGIDEGETPEQAMYRELYEEVG) match the Nudix box motif.

The protein belongs to the Nudix hydrolase family. RppH subfamily. The cofactor is a divalent metal cation.

Accelerates the degradation of transcripts by removing pyrophosphate from the 5'-end of triphosphorylated RNA, leading to a more labile monophosphorylated state that can stimulate subsequent ribonuclease cleavage. The protein is RNA pyrophosphohydrolase of Vibrio atlanticus (strain LGP32) (Vibrio splendidus (strain Mel32)).